The sequence spans 884 residues: MSKTHVYELAKKMGVENKELMARLKSLGIEVKSHLSVLEDEDVQKVTAPPTPPKGVQQQEEVRVTTTVIRRRPKAVAQPPEEVAPAAVESAVIEEAPAPRVEAVPEEPKASPAFAETVPAVEEPKGVEPKIGVPKVETPVASESKAEEPRVTAPPAQPKPVAAEEEKPTMNRARILGRVELPGLTTASKPVPKPAERREVVIPPKRKMEERAVTPQPAAPVADDRKKKAKTFTEPETPAGGAPGAKKGAPGGKKKEAFKKAELLEKRERIFEPGPKTGKGRRRERESVTFGKKTEITVPKAIKRIIKISESITVGELAKRMGVKATDLIRVLMKMGMMATINHPLDVDTATLIAAEFSYEIENVAIDTDEMLESAPDTPESLKKRPPVVTIMGHVDHGKTSLLDAIREANVIAGEAGGITQHIGAYDVELNGRKITFLDTPGHEAFTAMRARGAKVTDIVILVVAADDGVMPQTREAINHSKAAGVPIIIAINKIDKPEAKPERVKQELMEFGLVSEEWGGETIFVEVSAKKRINLPELLEMVLLQADVMDLKANPDKEARGTIVEAKLDRGRGPVATVLVQEGTLKVGDYFVAGVHSGRVRAMQNDRGDKVLAAGPSMPVEVIGFTGVPDAGDVFISLSDEKKAKEIASHRQQKLRETELAKHSKMSLEQLYDKIQKGEVKDLNAIVKADVQGSVEAVSDSLRKLSTDAVRLNVIHSSVGAITETDVNLASASNAIILGFNVRPEPKASAMAEKEGVDVRLYNIIYDAVEDIKKAMEGLLEPTLREKYLGRAEIREVFSVPKVGNVGGCYIQDGKVLRNASVRLLRDNVVVYEGKMSSLRRFKDDVKEVATGYECGIGLENYNDIKVGDIIEAFEIEKIATKL.

Disordered regions lie at residues 42–62 (DVQK…QEEV) and 123–254 (EPKG…GGKK). Residues 194-212 (PAERREVVIPPKRKMEERA) show a composition bias toward basic and acidic residues. Positions 234–248 (EPETPAGGAPGAKKG) are enriched in low complexity. In terms of domain architecture, tr-type G spans 384–553 (KRPPVVTIMG…LLQADVMDLK (170 aa)). Residues 393-400 (GHVDHGKT) form a G1 region. 393-400 (GHVDHGKT) provides a ligand contact to GTP. The segment at 418–422 (GITQH) is G2. The tract at residues 439-442 (DTPG) is G3. Residues 439–443 (DTPGH) and 493–496 (NKID) each bind GTP. The G4 stretch occupies residues 493–496 (NKID). The interval 529-531 (SAK) is G5.

The protein belongs to the TRAFAC class translation factor GTPase superfamily. Classic translation factor GTPase family. IF-2 subfamily.

The protein localises to the cytoplasm. Functionally, one of the essential components for the initiation of protein synthesis. Protects formylmethionyl-tRNA from spontaneous hydrolysis and promotes its binding to the 30S ribosomal subunits. Also involved in the hydrolysis of GTP during the formation of the 70S ribosomal complex. The sequence is that of Translation initiation factor IF-2 from Geobacter metallireducens (strain ATCC 53774 / DSM 7210 / GS-15).